The chain runs to 145 residues: Small ribosomal subunit protein eS19 (145 aa).

The disordered stretch occupies residues 120-145 (GGRRISENGQRDLDRIAAQTLEEDDE). The span at 123–134 (RISENGQRDLDR) shows a compositional bias: basic and acidic residues.

It belongs to the eukaryotic ribosomal protein eS19 family. In terms of assembly, component of the small ribosomal subunit. Mature ribosomes consist of a small (40S) and a large (60S) subunit. The 40S subunit contains about 32 different proteins and 1 molecule of RNA (18S). The 60S subunit contains 45 different proteins and 3 molecules of RNA (25S, 5.8S and 5S).

Its subcellular location is the cytoplasm. In terms of biological role, component of the ribosome, a large ribonucleoprotein complex responsible for the synthesis of proteins in the cell. The small ribosomal subunit (SSU) binds messenger RNAs (mRNAs) and translates the encoded message by selecting cognate aminoacyl-transfer RNA (tRNA) molecules. The large subunit (LSU) contains the ribosomal catalytic site termed the peptidyl transferase center (PTC), which catalyzes the formation of peptide bonds, thereby polymerizing the amino acids delivered by tRNAs into a polypeptide chain. The nascent polypeptides leave the ribosome through a tunnel in the LSU and interact with protein factors that function in enzymatic processing, targeting, and the membrane insertion of nascent chains at the exit of the ribosomal tunnel. RPS19A is required for proper maturation of the small (40S) ribosomal subunit. The sequence is that of Small ribosomal subunit protein eS19 (RPS19A) from Candida albicans (strain SC5314 / ATCC MYA-2876) (Yeast).